Here is a 630-residue protein sequence, read N- to C-terminus: Arginine--tRNA ligase (630 aa).

Positions 120 to 130 (ANPIHPLHIGH) match the 'HIGH' region motif.

This sequence belongs to the class-I aminoacyl-tRNA synthetase family.

It localises to the cytoplasm. It carries out the reaction tRNA(Arg) + L-arginine + ATP = L-arginyl-tRNA(Arg) + AMP + diphosphate. The sequence is that of Arginine--tRNA ligase from Pyrobaculum arsenaticum (strain DSM 13514 / JCM 11321 / PZ6).